Reading from the N-terminus, the 36-residue chain is uncharacterized protein (36 aa).

This is an uncharacterized protein from Treponema pallidum (strain Nichols).